We begin with the raw amino-acid sequence, 209 residues long: Probable GTP-binding protein EngB (209 aa).

The 177-residue stretch at 22–198 (TPLEIAFVGR…NRTVGSWFDA (177 aa)) folds into the EngB-type G domain. Residues S37 and T59 each contribute to the Mg(2+) site.

It belongs to the TRAFAC class TrmE-Era-EngA-EngB-Septin-like GTPase superfamily. EngB GTPase family. Requires Mg(2+) as cofactor.

Its function is as follows. Necessary for normal cell division and for the maintenance of normal septation. This Neisseria gonorrhoeae (strain ATCC 700825 / FA 1090) protein is Probable GTP-binding protein EngB.